Consider the following 419-residue polypeptide: Putative zinc metalloprotease SPs1691 (419 aa).

His-18 is a Zn(2+) binding site. Residue Glu-19 is part of the active site. His-22 contacts Zn(2+). 4 helical membrane passes run 169 to 191, 301 to 323, 343 to 365, and 392 to 411; these read LITN…ILLV, LAWS…FSLN, LESV…LIPI, and AYIT…AVTW. The PDZ domain occupies 175 to 274; it reads GPMNNFILGI…LKTVAVKPQK (100 aa).

Belongs to the peptidase M50B family. Zn(2+) is required as a cofactor.

It localises to the cell membrane. The protein is Putative zinc metalloprotease SPs1691 (eep) of Streptococcus pyogenes serotype M3 (strain SSI-1).